A 627-amino-acid chain; its full sequence is Sodium- and chloride-dependent GABA transporter 3 (627 aa).

Positions 1–36 (MTAEQALPLGNGKAAEEARGSEALGGGGGGAAGTRE) are disordered. Topologically, residues 1-53 (MTAEQALPLGNGKAAEEARGSEALGGGGGGAAGTREARDKAVHERGHWNNKVE) are cytoplasmic. At Ser21 the chain carries Phosphoserine. Gly residues predominate over residues 23–32 (ALGGGGGGAA). Helical transmembrane passes span 54–74 (FVLS…FPYL), 82–101 (AFLI…VFFL), and 126–146 (GIGY…IIIL). Over 147–220 (AWAIFYLSNC…DGIEHIGNLR (74 aa)) the chain is Extracellular. 3 N-linked (GlcNAc...) asparagine glycosylation sites follow: Asn182, Asn185, and Asn193. The next 9 membrane-spanning stretches (helical) occupy residues 221 to 239 (WELA…FCIW), 248 to 265 (VVYV…ILLI), 301 to 318 (IFFS…LGSY), 330 to 351 (IMLC…FSVL), 384 to 403 (MPLS…FLGL), 433 to 451 (LLIL…VMLT), 468 to 488 (GMCL…VYGS), 509 to 528 (WCWK…FFLV), and 548 to 566 (IGWL…WIFI). The Cytoplasmic segment spans residues 567-627 (KLWKTEGTLP…SAITEKETHF (61 aa)).

It belongs to the sodium:neurotransmitter symporter (SNF) (TC 2.A.22) family. SLC6A11 subfamily. Brain and retina. Expressed predominantly within neurons. Expressed in the hippocampus (at protein level).

It is found in the cell membrane. The catalysed reaction is 4-aminobutanoate(out) + chloride(out) + 2 Na(+)(out) = 4-aminobutanoate(in) + chloride(in) + 2 Na(+)(in). The enzyme catalyses taurine(out) + chloride(out) + 2 Na(+)(out) = taurine(in) + chloride(in) + 2 Na(+)(in). It carries out the reaction beta-alanine(out) + chloride(out) + 2 Na(+)(out) = beta-alanine(in) + chloride(in) + 2 Na(+)(in). It catalyses the reaction hypotaurine(out) + chloride(out) + 2 Na(+)(out) = hypotaurine(in) + chloride(in) + 2 Na(+)(in). Its activity is regulated as follows. GABA transport is inhibited by beta-alanine. Functionally, mediates sodium- and chloride-dependent transport of gamma-aminobutyric acid (GABA). Can also mediate transport of beta-alanine and to a lower extent that of taurine and hypotaurine. This chain is Sodium- and chloride-dependent GABA transporter 3 (Slc6a11), found in Rattus norvegicus (Rat).